Here is a 329-residue protein sequence, read N- to C-terminus: UDP-2,3-diacylglucosamine pyrophosphatase LpxG (329 aa).

The chain crosses the membrane as a helical span at residues 2-24; it reads FVSVGITASLTTILAAPVLTWVW. A divalent metal cation-binding residues include Asp-59, His-61, Asp-91, Asn-123, His-257, and His-259.

It belongs to the metallophosphoesterase superfamily. LpxG family. Mn(2+) is required as a cofactor.

The protein localises to the cell inner membrane. It carries out the reaction UDP-2,3-diacyl-alpha-D-glucosamine + H2O = 2,3-diacyl-alpha-D-glucosaminyl 1-phosphate + UMP + 2 H(+). Its pathway is glycolipid biosynthesis; lipid IV(A) biosynthesis. Hydrolyzes the pyrophosphate bond of UDP-2,3-diacylglucosamine to form 2,3-diacylglucosamine 1-phosphate (lipid X) and UMP by catalyzing the attack of water at the alpha-P atom. Involved in the biosynthesis of lipid A, a phosphorylated glycolipid that anchors the lipooligosaccharide (LOS) to the outer membrane of the cell. Can functionally complement lpxH deficiency in E.coli. Overexpression of LpxG results in toxic accumulation of lipid X and profoundly reduces the infectivity of C.trachomatis. Can utilize UDP-2-N,3-O-bis((3R)-3-hydroxytetradecanoyl)-alpha-D-glucosamine as substrate in vitro, but the substrate is likely UDP-2-N-((3R)-3-hydroxyicosanoyl),3-O-(tetradecanoyl)-alpha-D-glucosamine in vivo. The polypeptide is UDP-2,3-diacylglucosamine pyrophosphatase LpxG (Chlamydia trachomatis serovar D (strain ATCC VR-885 / DSM 19411 / UW-3/Cx)).